We begin with the raw amino-acid sequence, 343 residues long: Cyclic AMP-AMP-AMP synthase (343 aa).

It belongs to the CD-NTase family. D01 subfamily. The cofactor is Mg(2+).

It carries out the reaction 3 ATP = 2',3',3'-c-tri-AMP + 3 diphosphate. Its function is as follows. Cyclic nucleotide synthase (second messenger synthase) of a CBASS antivirus system. CBASS (cyclic oligonucleotide-based antiphage signaling system) provides immunity against bacteriophage. The CD-NTase protein synthesizes cyclic nucleotides in response to infection; these serve as specific second messenger signals. The signals activate a diverse range of effectors, leading to bacterial cell death and thus abortive phage infection. A type II-C(AAAA) CBASS system. Functionally, cyclic trinucleotide synthase that catalyzes the synthesis of 2',3',3'-cyclic AMP-AMP-AMP (2',3',3'-c-tri-AMP or 2'3'3'-cAAA) as the major product, as well as another cyclic AMP(4) 2'-5'-linked minor product that acts as a second messenger for cell signal transduction. The chain is Cyclic AMP-AMP-AMP synthase from Acinetobacter sp. (strain ATCC 27244 / 9458).